We begin with the raw amino-acid sequence, 39 residues long: MSKYIVLLVVSAIALLQFSMIECNTEDLGTIKQPLRFGK.

The N-terminal stretch at 1-23 (MSKYIVLLVVSAIALLQFSMIEC) is a signal peptide. At Phe-37 the chain carries Phenylalanine amide.

The protein belongs to the FARP (FMRFamide related peptide) family. As to expression, expressed by the venom secretory cell of the spine. The spine is a cuticular structure containing a single large nucleated venom-secreting cell at its base. It is an independent unit capable of producing, storing and injecting venom. On the back of A.stimulea caterpillars, spines are grouped together by 50 to 100 to form scoli, of which there are eight.

The protein resides in the secreted. Strongly activates (at 30 uM) the human neuropeptide FF receptor 1 (NPFF1R), a G-protein coupled receptor, with an effect that is equipotent to the endogenous RFRP-1 ligand in activating NPFFR1. Is toxic when injected into Drosophila melanogaster. Also shows a moderate anthelmintic activity against the parasitic nematode H.contortus (drug susceptible Kirby isolate) (IC(50)=20.1 uM). This chain is U-limacoditoxin(13)-As54, found in Acharia stimulea (Saddleback caterpillar moth).